A 650-amino-acid polypeptide reads, in one-letter code: 1-deoxy-D-xylulose-5-phosphate synthase (650 aa).

Residues H87 and 128–130 (GHS) each bind thiamine diphosphate. A Mg(2+)-binding site is contributed by D159. Thiamine diphosphate-binding positions include 160–161 (GS), N188, Y299, and E383. Residue N188 participates in Mg(2+) binding.

Belongs to the transketolase family. DXPS subfamily. Homodimer. Mg(2+) is required as a cofactor. Thiamine diphosphate serves as cofactor.

It catalyses the reaction D-glyceraldehyde 3-phosphate + pyruvate + H(+) = 1-deoxy-D-xylulose 5-phosphate + CO2. Its pathway is metabolic intermediate biosynthesis; 1-deoxy-D-xylulose 5-phosphate biosynthesis; 1-deoxy-D-xylulose 5-phosphate from D-glyceraldehyde 3-phosphate and pyruvate: step 1/1. Functionally, catalyzes the acyloin condensation reaction between C atoms 2 and 3 of pyruvate and glyceraldehyde 3-phosphate to yield 1-deoxy-D-xylulose-5-phosphate (DXP). The chain is 1-deoxy-D-xylulose-5-phosphate synthase from Syntrophus aciditrophicus (strain SB).